The sequence spans 298 residues: Putative GATA zinc finger domain-containing protein 25 (298 aa).

A coiled-coil region spans residues 4 to 37 (DNKNKNDNYQESIQRIVNQRNNLLKEIENKINQQ). The segment at 148 to 227 (QQQLQQSHTK…RGRPSKPKPE (80 aa)) is disordered. Over residues 183–202 (EENEENEENEENEENEENEE) the composition is skewed to acidic residues. The segment covering 203 to 212 (NKEKDVEVAK) has biased composition (basic and acidic residues). Basic residues predominate over residues 214–223 (NKPKRGRPSK). The GATA-type; degenerate zinc finger occupies 229–256 (CFRYGTRSCPYWRKNVIKGELVDVCNAC).

The polypeptide is Putative GATA zinc finger domain-containing protein 25 (gtaY) (Dictyostelium discoideum (Social amoeba)).